The primary structure comprises 145 residues: Putative antiporter subunit mnhG2 (145 aa).

A run of 3 helical transmembrane segments spans residues 11–31 (IAAV…IGIV), 51–71 (VLLT…FFSV), and 72–92 (RLLL…HLVA).

This sequence belongs to the CPA3 antiporters (TC 2.A.63) subunit G family. In terms of assembly, may form a heterooligomeric complex that consists of seven subunits: mnhA2, mnhB2, mnhC2, mnhD2, mnhE2, mnhF2 and mnhG2.

The protein localises to the cell membrane. The protein is Putative antiporter subunit mnhG2 (mnhG2) of Staphylococcus aureus (strain COL).